Reading from the N-terminus, the 122-residue chain is Phospholipase A2 nigroviriditoxin basic subunit B (122 aa).

7 disulfide bridges follow: cysteine 26–cysteine 115, cysteine 28–cysteine 44, cysteine 43–cysteine 95, cysteine 49–cysteine 122, cysteine 50–cysteine 88, cysteine 57–cysteine 81, and cysteine 75–cysteine 86. The Ca(2+) site is built by tyrosine 27, glycine 29, and glycine 31. Residue histidine 47 is part of the active site. Residue aspartate 48 coordinates Ca(2+). The active site involves aspartate 89.

This sequence belongs to the phospholipase A2 family. Group II subfamily. D49 sub-subfamily. In terms of assembly, nigroviriditoxin is a heterodimer of an acidic subunit A and a basic subunit B. It depends on Ca(2+) as a cofactor. Expressed by the venom gland.

The protein resides in the secreted. It catalyses the reaction a 1,2-diacyl-sn-glycero-3-phosphocholine + H2O = a 1-acyl-sn-glycero-3-phosphocholine + a fatty acid + H(+). In terms of biological role, heterodimer A-B: Nigroviriditoxin possesses phospholipase A2 (PLA2) activity. It consists of a non-covalent association of a basic PLA2 subunit B with a non-enzymatic subunit A. Subunit B: Snake venom phospholipase A2 (PLA2) that induces myonecrosis in mice. PLA2 catalyzes the calcium-dependent hydrolysis of the 2-acyl groups in 3-sn-phosphoglycerides. In Bothriechis nigroviridis (Black-speckled palm pit viper), this protein is Phospholipase A2 nigroviriditoxin basic subunit B.